The primary structure comprises 140 residues: MAIERTFSILKPDATARNLTGAINALIEKAGLRIVAQKRIRMTREQAETFYAVHKARPFFGELVDFMISGPVVVQVLEGENAVLKHREIMGATDPSKAADGTIRKLHATSVGENSVHGSDATETAAVEIAQFFSGNEIVG.

6 residues coordinate ATP: K11, F59, R87, T93, R104, and N114. The Pros-phosphohistidine intermediate role is filled by H117.

This sequence belongs to the NDK family. As to quaternary structure, homotetramer. The cofactor is Mg(2+).

It is found in the cytoplasm. It carries out the reaction a 2'-deoxyribonucleoside 5'-diphosphate + ATP = a 2'-deoxyribonucleoside 5'-triphosphate + ADP. It catalyses the reaction a ribonucleoside 5'-diphosphate + ATP = a ribonucleoside 5'-triphosphate + ADP. Functionally, major role in the synthesis of nucleoside triphosphates other than ATP. The ATP gamma phosphate is transferred to the NDP beta phosphate via a ping-pong mechanism, using a phosphorylated active-site intermediate. This Nitrobacter hamburgensis (strain DSM 10229 / NCIMB 13809 / X14) protein is Nucleoside diphosphate kinase.